A 274-amino-acid chain; its full sequence is tRNA-cytidine(32) 2-sulfurtransferase (274 aa).

The short motif at 40–45 (SGGKDS) is the PP-loop motif element. 3 residues coordinate [4Fe-4S] cluster: C115, C118, and C206.

The protein belongs to the TtcA family. Homodimer. It depends on Mg(2+) as a cofactor. [4Fe-4S] cluster is required as a cofactor.

The protein localises to the cytoplasm. The catalysed reaction is cytidine(32) in tRNA + S-sulfanyl-L-cysteinyl-[cysteine desulfurase] + AH2 + ATP = 2-thiocytidine(32) in tRNA + L-cysteinyl-[cysteine desulfurase] + A + AMP + diphosphate + H(+). It participates in tRNA modification. In terms of biological role, catalyzes the ATP-dependent 2-thiolation of cytidine in position 32 of tRNA, to form 2-thiocytidine (s(2)C32). The sulfur atoms are provided by the cysteine/cysteine desulfurase (IscS) system. This is tRNA-cytidine(32) 2-sulfurtransferase from Pseudomonas fluorescens (strain ATCC BAA-477 / NRRL B-23932 / Pf-5).